A 1303-amino-acid chain; its full sequence is Zinc finger CCCH domain-containing protein 4 (1303 aa).

The span at 1-33 (MEAAPGTPPPPPSESPPPPSPPPPSTPSPPPCS) shows a compositional bias: pro residues. The segment at 1 to 388 (MEAAPGTPPP…RDHDKPHQQS (388 aa)) is disordered. The segment covering 53 to 73 (DREDGELEEGELEDDGAEETQ) has biased composition (acidic residues). 2 positions are modified to phosphothreonine: Thr72 and Thr75. Residues Ser76, Ser92, and Ser94 each carry the phosphoserine modification. Basic and acidic residues predominate over residues 80-99 (ERSRKEKGEKHHSDSDEEKS). A coiled-coil region spans residues 95-128 (DEEKSHRRLKRKRKKEREKEKRRSKKRRKSKHKR). Positions 100–130 (HRRLKRKRKKEREKEKRRSKKRRKSKHKRHA) are enriched in basic residues. Residues 135–144 (DFSDFSDDSD) are compositionally biased toward acidic residues. Tyr155 carries the phosphotyrosine modification. Positions 194–218 (EDYENEQYGEYEGDEEEDMGKEDYD) are enriched in acidic residues. Residues 219-235 (DFTKELNQYRRAKEGSS) are compositionally biased toward basic and acidic residues. Basic residues predominate over residues 238-251 (RGSRGRGRGYRGRG). Residues 252–274 (SRGGSRGRGMGRGSRGRGRGSMG) show a composition bias toward gly residues. The segment covering 278-304 (PEDEEDFYEEEMDYGESEEPMGDDDYD) has biased composition (acidic residues). Positions 305-321 (EYSKELNQYRRSKDSRG) are enriched in basic and acidic residues. Basic residues predominate over residues 323–346 (GLSRGRGRGSRGRGKGMGRGRGRG). A compositionally biased stretch (acidic residues) spans 358–369 (NDDEDFYDEDMG). A compositionally biased stretch (basic and acidic residues) spans 377–388 (RSRDHDKPHQQS). 3 C3H1-type zinc fingers span residues 390-417 (KKGK…HDIE), 419-446 (PKKR…HGDF), and 447-470 (PCKL…HDPL). Residues 486 to 496 (AEAGAEDEKEV) show a composition bias toward acidic residues. Positions 486-571 (AEAGAEDEKE…HEPLSPQQLQ (86 aa)) are disordered. 2 stretches are compositionally biased toward pro residues: residues 507–529 (LPKP…PQAP) and 539–558 (GGPP…PQMP). Arg601 is subject to Asymmetric dimethylarginine. The span at 605-624 (PGGPPGPMGPGPNMGPPGPM) shows a compositional bias: pro residues. Disordered regions lie at residues 605–685 (PGGP…SGMM), 710–955 (GLLG…PRSQ), and 996–1288 (PPVP…ASLK). The span at 630–650 (PDMHPDMHPDMHPDMHADMHA) shows a compositional bias: basic and acidic residues. Residues 659 to 673 (NPGPPMGPGGPPMMP) show a composition bias toward pro residues. Composition is skewed to basic and acidic residues over residues 717-739 (DYGH…HPLE) and 782-795 (ERAR…KQDR). A coiled-coil region spans residues 767 to 800 (RALYLRIQQKQQEEEERARRLAESSKQDRENEEG). Residues Ser807 and Ser808 each carry the phosphoserine modification. Residues 815 to 843 (SSVTSILKTLRQQTSSRPPASVGELSSSG) are compositionally biased toward polar residues. Positions 860–875 (ADPRLSRDPRLTRHVE) are enriched in basic and acidic residues. Ser904, Ser907, and Ser908 each carry phosphoserine. Positions 904–918 (SLHSSPVGPSSSKGS) are enriched in low complexity. Polar residues-rich tracts occupy residues 1028 to 1038 (GASTDSSTQGA) and 1053 to 1062 (VNATGSSAAP). Basic and acidic residues predominate over residues 1067 to 1084 (KPSDPRVRKAPTDPRLQK). Residues 1097–1110 (PGPAEAPSPTASPS) show a composition bias toward low complexity. The residue at position 1104 (Ser1104) is a Phosphoserine. Thr1106 is modified (phosphothreonine). Residues Ser1108, Ser1110, and Ser1114 each carry the phosphoserine modification. Thr1118 carries the phosphothreonine modification. A compositionally biased stretch (gly residues) spans 1129–1139 (GGLGQGGGGGQ). A compositionally biased stretch (low complexity) spans 1224–1234 (KAAAAPAATTA). A compositionally biased stretch (pro residues) spans 1235-1245 (TPPPEGAPPQP). Over residues 1259–1268 (VKQTPKTGSG) the composition is skewed to polar residues. Ser1269 and Ser1275 each carry phosphoserine.

Belongs to the suppressor of sable family. In terms of assembly, interacts with WDR82.

The protein localises to the chromosome. Functionally, RNA-binding protein that suppresses transcription of long non-coding RNAs (lncRNAs). LncRNAs are defined as transcripts more than 200 nucleotides that are not translated into protein. Together with WDR82, part of a transcription termination checkpoint that promotes transcription termination of lncRNAs and their subsequent degradation by the exosome. The transcription termination checkpoint is activated by the inefficiently spliced first exon of lncRNAs. The polypeptide is Zinc finger CCCH domain-containing protein 4 (Homo sapiens (Human)).